Here is a 190-residue protein sequence, read N- to C-terminus: Peptidoglycan recognition protein 1 (190 aa).

Positions 1-21 (MSRRYTPLAWVLLALLGLGAA) are cleaved as a signal peptide. Residue Gln22 is modified to Pyrrolidone carboxylic acid. Cystine bridges form between Cys24–Cys148, Cys40–Cys85, and Cys61–Cys67. An N-acetylmuramoyl-L-alanine amidase domain is found at 46 to 174 (QPVRYVVVSH…RDVQQTLSPG (129 aa)).

It belongs to the N-acetylmuramoyl-L-alanine amidase 2 family. In terms of assembly, homodimer; disulfide-linked.

The protein resides in the secreted. It is found in the cytoplasmic granule. Innate immunity protein that plays several important functions in antimicrobial and antitumor defense systems. Acts as a pattern receptor that binds to murein peptidoglycans (PGN) of Gram-positive bacteria and thus provides bactericidal activity. Forms an equimolar complex with heat shock protein HSPA1A and induces programmed cell death through apoptosis and necroptosis in tumor cell lines by activating the TNFR1 receptor on the target cell membrane. In addition, acts in complex with the Ca(2+)-binding protein S100A4 as a chemoattractant able to induce lymphocyte movement. Mechanistically, this complex acts as a ligand of the chemotactic receptors CCR5 and CXCR3 which are present on the cells of the immune system. Promotes also the activation of lymphocytes that become able to kill virus-infected cells as well as tumor cells by modulating the spectrum of their target-cell specificity. Induction of cytotoxicity on monocyte surface requires interaction with TREM1 receptor. The sequence is that of Peptidoglycan recognition protein 1 (PGLYRP1) from Bos indicus (Zebu).